A 453-amino-acid chain; its full sequence is Chromosomal replication initiator protein DnaA (453 aa).

Residues 1-71 (MSEKEIWEKV…QAILFDVVGY (71 aa)) form a domain I, interacts with DnaA modulators region. A domain II region spans residues 71–114 (YEVKPHFITTEELANYSNNETATPKETTKPSTETTEDNHVLGRE). The domain III, AAA+ region stretch occupies residues 115 to 331 (QFNAHNTFDT…GALTRLLAYS (217 aa)). The ATP site is built by Gly159, Gly161, Lys162, and Thr163. Positions 332–453 (QLLGKPITTE…ENLEKEIRNV (122 aa)) are domain IV, binds dsDNA.

The protein belongs to the DnaA family. Oligomerizes as a right-handed, spiral filament on DNA at oriC.

The protein localises to the cytoplasm. Plays an essential role in the initiation and regulation of chromosomal replication. ATP-DnaA binds to the origin of replication (oriC) to initiate formation of the DNA replication initiation complex once per cell cycle. Binds the DnaA box (a 9 base pair repeat at the origin) and separates the double-stranded (ds)DNA. Forms a right-handed helical filament on oriC DNA; dsDNA binds to the exterior of the filament while single-stranded (ss)DNA is stabiized in the filament's interior. The ATP-DnaA-oriC complex binds and stabilizes one strand of the AT-rich DNA unwinding element (DUE), permitting loading of DNA polymerase. After initiation quickly degrades to an ADP-DnaA complex that is not apt for DNA replication. Binds acidic phospholipids. In Staphylococcus aureus (strain Mu3 / ATCC 700698), this protein is Chromosomal replication initiator protein DnaA.